A 215-amino-acid polypeptide reads, in one-letter code: Nascent polypeptide-associated complex subunit alpha (215 aa).

The tract at residues 1-82 (MPGEATETVP…EKKARKAMSK (82 aa)) is disordered. Over residues 9-28 (VPVTEQEMQQPQAETGSGTE) the composition is skewed to polar residues. Residues 29 to 42 (SDSDESVPDLEEGD) are compositionally biased toward acidic residues. A compositionally biased stretch (low complexity) spans 44–57 (AQTQTQQAQLAAAA). Residues 70–135 (SRSEKKARKA…AKIEDLSQQA (66 aa)) form the NAC-A/B domain. Ser166 is modified (phosphoserine). The 38-residue stretch at 176–213 (VEVKDIELVMSQANVSRAKAVRALKNNNNDIVNAIMEL) folds into the UBA domain.

This sequence belongs to the NAC-alpha family.

May promote appropriate targeting of ribosome-nascent polypeptide complexes. This chain is Nascent polypeptide-associated complex subunit alpha (naca), found in Danio rerio (Zebrafish).